A 1888-amino-acid chain; its full sequence is Tensin-1 (1888 aa).

Pro residues predominate over residues 21–31; the sequence is PQPPGTPPGPA. The tract at residues 21-45 is disordered; that stretch reads PQPPGTPPGPARPERCEPGGAAPDP. A Phorbol-ester/DAG-type zinc finger spans residues 61 to 108; that stretch reads THHFKVKAFKKVKPCGICRQAITREGCVCKVCSFSCHRKCQAKVAAPC. The tract at residues 132-174 is disordered; sequence GEGDCRVGSSPKNLEEGGSMRVSPSIQPQPQSQPTSLSRNTSV. Residues 154 to 167 show a composition bias toward low complexity; the sequence is SPSIQPQPQSQPTS. The region spanning 175–347 is the Phosphatase tensin-type domain; it reads SRAMEDSCEL…HYFSGLLSGS (173 aa). In terms of domain architecture, C2 tensin-type spans 352 to 478; the sequence is NKPLFLHHVI…GKVEFVFSYG (127 aa). S509 and S535 each carry phosphoserine. Y537 bears the Phosphotyrosine mark. 3 disordered regions span residues 543–608, 696–722, and 789–854; these read KDSL…PQEK, VTNT…YSTE, and RSQS…SAET. Position 549 is a phosphoserine (S549). The span at 571-584 shows a compositional bias: polar residues; sequence LSVSSDSGNSTAST. Residue S604 is modified to Phosphoserine. S792 carries the phosphoserine modification. Positions 835 to 852 are enriched in polar residues; the sequence is RSPLQSLARSKPSPQLSA. Residue S867 is modified to Phosphoserine. Disordered regions lie at residues 893 to 1077 and 1109 to 1555; these read PLHK…RSPV and EEME…AGSL. A compositionally biased stretch (low complexity) spans 905-922; the sequence is PGASPLSSQPLLGSSRQS. Phosphoserine occurs at positions 930, 935, and 952. Polar residues predominate over residues 962–986; that stretch reads GSNQSFHPKSPASSTFLPSPHSSAG. At T1015 the chain carries Phosphothreonine. S1054 is subject to Phosphoserine. Positions 1057–1069 are enriched in polar residues; that stretch reads QYENQSPEATSPR. Position 1058 is a phosphotyrosine (Y1058). A phosphoserine mark is found at S1062, S1118, and S1122. Basic and acidic residues predominate over residues 1169–1179; that stretch reads EVTKPPEEPRS. Positions 1227–1239 are enriched in low complexity; the sequence is SPSPLSTSSPILS. Over residues 1240–1257 the composition is skewed to polar residues; the sequence is ADSTSVGSFPSVVSSDQG. At S1279 the chain carries Phosphoserine. Over residues 1284-1300 the composition is skewed to low complexity; it reads SYQSSSPVPVGGSSYNS. The span at 1301-1322 shows a compositional bias: polar residues; that stretch reads PDYSLQPFSSSPESQGQPQYSA. A glycan (O-linked (GalNAc...) serine) is linked at S1321. Residue S1331 is modified to Phosphoserine. T1343 bears the Phosphothreonine mark. A Phosphoserine modification is found at S1346. T1420 carries the post-translational modification Phosphothreonine. S1423 is modified (phosphoserine). The span at 1436–1446 shows a compositional bias: polar residues; sequence NLASSLHSNAV. Phosphoserine is present on residues S1448, S1463, and S1468. Over residues 1490-1507 the composition is skewed to polar residues; the sequence is LSRQSSASGYQAPSTPSF. Residues 1518–1530 are compositionally biased toward low complexity; the sequence is SSPATSPSPDSAA. Phosphoserine is present on residues S1535, S1547, S1554, and S1599. Positions 1616–1725 constitute an SH2 domain; the sequence is WYKPEISREQ…ALPCKLVIPS (110 aa). The residue at position 1741 (S1741) is a Phosphoserine. The PTB domain maps to 1751–1885; the sequence is ACNVLFVNSV…FVSKVMLSAG (135 aa).

This sequence belongs to the PTEN phosphatase protein family. Binds to actin filaments and interacts with phosphotyrosine-containing proteins. Interacts with STARD8. Interacts with protein phosphatase PPP1CA. Interacts (via N-terminus) with Rho GTPase-activating protein DLC1; the interaction is decreased by phosphorylation of TNS1. Interacts with tyrosine-phosphorylated proteins BCAR1/p130Cas and PTK2/FAK; the interactions are increased by phosphorylation of TNS1. Post-translationally, extensively phosphorylated on serine and threonine residues in a p38 MAPK-dependent manner which reduces interaction with DLC1 and increases interaction with tyrosine-phosphorylated proteins including BCAR1/p130cas and PTK2/FAK. The majority of the phosphorylated Ser/Thr residues are immediately adjacent to a proline residue. Also phosphorylated on tyrosine residues. In terms of processing, rapidly cleaved by calpain II.

Its subcellular location is the cell surface. The protein localises to the cell junction. The protein resides in the focal adhesion. It is found in the cytoplasm. It localises to the cytoskeleton. May act as a protein phosphatase and/or a lipid phosphatase. Involved in fibrillar adhesion formation. Essential for myofibroblast differentiation and myofibroblast-mediated extracellular matrix deposition. Enhances RHOA activation in the presence of DLC1. Plays a role in cell polarization and migration. May be involved in cartilage development and in linking signal transduction pathways to the cytoskeleton. The protein is Tensin-1 of Mus musculus (Mouse).